The chain runs to 154 residues: Putative pre-16S rRNA nuclease (154 aa).

The protein belongs to the YqgF nuclease family.

The protein resides in the cytoplasm. Functionally, could be a nuclease involved in processing of the 5'-end of pre-16S rRNA. The sequence is that of Putative pre-16S rRNA nuclease from Pelotomaculum thermopropionicum (strain DSM 13744 / JCM 10971 / SI).